Reading from the N-terminus, the 158-residue chain is Small ribosomal subunit protein uS15 (158 aa).

Residues 1–18 are compositionally biased toward basic residues; that stretch reads MARMHARKRGKSGSKRPP. The segment at 1–21 is disordered; the sequence is MARMHARKRGKSGSKRPPRTA.

This sequence belongs to the universal ribosomal protein uS15 family. Part of the 30S ribosomal subunit.

In Pyrococcus horikoshii (strain ATCC 700860 / DSM 12428 / JCM 9974 / NBRC 100139 / OT-3), this protein is Small ribosomal subunit protein uS15.